The sequence spans 99 residues: Aspartyl/glutamyl-tRNA(Asn/Gln) amidotransferase subunit C (99 aa).

The protein belongs to the GatC family. As to quaternary structure, heterotrimer of A, B and C subunits.

The catalysed reaction is L-glutamyl-tRNA(Gln) + L-glutamine + ATP + H2O = L-glutaminyl-tRNA(Gln) + L-glutamate + ADP + phosphate + H(+). It catalyses the reaction L-aspartyl-tRNA(Asn) + L-glutamine + ATP + H2O = L-asparaginyl-tRNA(Asn) + L-glutamate + ADP + phosphate + 2 H(+). In terms of biological role, allows the formation of correctly charged Asn-tRNA(Asn) or Gln-tRNA(Gln) through the transamidation of misacylated Asp-tRNA(Asn) or Glu-tRNA(Gln) in organisms which lack either or both of asparaginyl-tRNA or glutaminyl-tRNA synthetases. The reaction takes place in the presence of glutamine and ATP through an activated phospho-Asp-tRNA(Asn) or phospho-Glu-tRNA(Gln). This chain is Aspartyl/glutamyl-tRNA(Asn/Gln) amidotransferase subunit C, found in Paracidovorax citrulli (strain AAC00-1) (Acidovorax citrulli).